Consider the following 105-residue polypeptide: Met repressor (105 aa).

The protein belongs to the MetJ family. In terms of assembly, homodimer.

Its subcellular location is the cytoplasm. This regulatory protein, when combined with SAM (S-adenosylmethionine) represses the expression of the methionine regulon and of enzymes involved in SAM synthesis. This Citrobacter koseri (strain ATCC BAA-895 / CDC 4225-83 / SGSC4696) protein is Met repressor.